A 477-amino-acid polypeptide reads, in one-letter code: Glycogen synthase (477 aa).

Residue K15 coordinates ADP-alpha-D-glucose.

Belongs to the glycosyltransferase 1 family. Bacterial/plant glycogen synthase subfamily.

It carries out the reaction [(1-&gt;4)-alpha-D-glucosyl](n) + ADP-alpha-D-glucose = [(1-&gt;4)-alpha-D-glucosyl](n+1) + ADP + H(+). The protein operates within glycan biosynthesis; glycogen biosynthesis. Functionally, synthesizes alpha-1,4-glucan chains using ADP-glucose. This Shigella dysenteriae serotype 1 (strain Sd197) protein is Glycogen synthase.